The following is a 429-amino-acid chain: Glucose-1-phosphate adenylyltransferase (429 aa).

Residues Gly-162, 177 to 178, and Ser-209 contribute to the alpha-D-glucose 1-phosphate site; that span reads EK.

Belongs to the bacterial/plant glucose-1-phosphate adenylyltransferase family. In terms of assembly, homotetramer.

It carries out the reaction alpha-D-glucose 1-phosphate + ATP + H(+) = ADP-alpha-D-glucose + diphosphate. It participates in glycan biosynthesis; glycogen biosynthesis. In terms of biological role, involved in the biosynthesis of ADP-glucose, a building block required for the elongation reactions to produce glycogen. Catalyzes the reaction between ATP and alpha-D-glucose 1-phosphate (G1P) to produce pyrophosphate and ADP-Glc. This chain is Glucose-1-phosphate adenylyltransferase, found in Trichormus variabilis (strain ATCC 29413 / PCC 7937) (Anabaena variabilis).